We begin with the raw amino-acid sequence, 243 residues long: Transmembrane protein 174 (243 aa).

2 helical membrane-spanning segments follow: residues 40–60 (LLFSGIFLGLVGITFTVMGWI) and 73–93 (LLGPILLSVGVTFILISVCKF). The interval 205-229 (AGHDRPSSDADQLEGTQMGEEERVC) is disordered.

In terms of assembly, interacts with SLC34A1; regulates SLC34A1 internalization by PTH and FGF23.

Its subcellular location is the endoplasmic reticulum membrane. It localises to the apical cell membrane. Its function is as follows. Regulator of plasma phosphate homeostasis. Decreases serum inorganic phosphate (Pi) uptake by regulating the sodium-phosphate cotransporter SLC34A1 trafficking by PTH and FGF23 in the kidney. The polypeptide is Transmembrane protein 174 (Tmem174) (Rattus norvegicus (Rat)).